The chain runs to 133 residues: Small ribosomal subunit protein uS8 (133 aa).

Belongs to the universal ribosomal protein uS8 family. Part of the 30S ribosomal subunit. Contacts proteins S5 and S12.

One of the primary rRNA binding proteins, it binds directly to 16S rRNA central domain where it helps coordinate assembly of the platform of the 30S subunit. This chain is Small ribosomal subunit protein uS8, found in Chloroflexus aggregans (strain MD-66 / DSM 9485).